Here is a 152-residue protein sequence, read N- to C-terminus: Large ribosomal subunit protein uL22 (152 aa).

This sequence belongs to the universal ribosomal protein uL22 family. As to quaternary structure, part of the 50S ribosomal subunit.

Its function is as follows. This protein binds specifically to 23S rRNA. It makes multiple contacts with different domains of the 23S rRNA in the assembled 50S subunit and ribosome. Functionally, the globular domain of the protein is located near the polypeptide exit tunnel on the outside of the subunit, while an extended beta-hairpin is found that lines the wall of the exit tunnel in the center of the 70S ribosome. In Nitrosopumilus maritimus (strain SCM1), this protein is Large ribosomal subunit protein uL22.